Reading from the N-terminus, the 205-residue chain is Large ribosomal subunit protein uL18 (205 aa).

Belongs to the universal ribosomal protein uL18 family. Part of the 50S ribosomal subunit. Contacts the 5S and 23S rRNAs.

Its function is as follows. This is one of the proteins that bind and probably mediate the attachment of the 5S RNA into the large ribosomal subunit, where it forms part of the central protuberance. The sequence is that of Large ribosomal subunit protein uL18 from Pyrobaculum neutrophilum (strain DSM 2338 / JCM 9278 / NBRC 100436 / V24Sta) (Thermoproteus neutrophilus).